Here is a 155-residue protein sequence, read N- to C-terminus: Ribosomal RNA large subunit methyltransferase H (155 aa).

Residues leucine 73, glycine 104, and 123 to 128 (LSALTL) each bind S-adenosyl-L-methionine.

The protein belongs to the RNA methyltransferase RlmH family. As to quaternary structure, homodimer.

It is found in the cytoplasm. It catalyses the reaction pseudouridine(1915) in 23S rRNA + S-adenosyl-L-methionine = N(3)-methylpseudouridine(1915) in 23S rRNA + S-adenosyl-L-homocysteine + H(+). Specifically methylates the pseudouridine at position 1915 (m3Psi1915) in 23S rRNA. This Chromohalobacter salexigens (strain ATCC BAA-138 / DSM 3043 / CIP 106854 / NCIMB 13768 / 1H11) protein is Ribosomal RNA large subunit methyltransferase H.